We begin with the raw amino-acid sequence, 886 residues long: MNSVNNIRSTFLDYFHRNGHEVLSSSPLVPRNDPTLMFTNAGMVQFKNVFTGLEKHSYNRATTAQKCVRAGGKHNDLDNVGYTARHHTFFEMLGNFSFSNYFKEEAIFYAWNLLTKEFCLSKDKLLVTVYHDDDVAAGLWRKISGLSEEKIIRIATNDNFWMMGDTGPCGPCSEIFYDHGDKIWGGPPGSADEDGDRFIEIWNLVFMQYEQLSKEKRIELPQPSIDTGMGLERIAAVLQGVHDNYDIDLFRTLIHASQEIIGVKATGDFFASHRVIADHLRSSAFLIADGIMPSNEGRGYVLRRIMRRAMRHAHLLGSKDLLMWRLVPVLISEMGQAYPELVRAESLISEILKLEETRFRKTLERGLGLLNEASTHLEEGDYFNGEVAFKLYDTYGFPLDLTQDALRRRGISVDVDAFDKAMKRQKAEARANWSGSGDCVTETVWFSIRDQVGATEFLGYETEKAEGIITALIRDGEVVDHIDLGQKAMIVVNQTPFYGESGGQVGDSGIISGANFIFEVHDTQKKGDNVFIHIGEIKTGQAKKHDCVELIVDSARRRKIRANHSATHLLHESLRQTLGSHVVQKGSFVSPDRLRFDFSHPKSISSEELKKIEDLANDIVLQNSKVTTRLMAIDDAIAEGAMALFGEKYGDEVRVISMGNNLEQTGSKKWWSIELCGGTHVQRTGDIGLIHIISETSVAAGVRRIEALTATAARLYLHGQDRRVYEIAGLLKTSPADVQERVQTLLDERRKLEKELNDSRKKIALNGGSVNSQGDIQTINGISFMGGVVSNILPKDLKALVDSGKKKIGSGVVAFISVSEDGKGSAVVGVTDDLTDTLNAVDLVRIISVTLGGQGGGGRRDMAQAGGSEGGKADEALVALKDSLKG.

4 residues coordinate Zn(2+): H564, H568, C676, and H680.

The protein belongs to the class-II aminoacyl-tRNA synthetase family. Zn(2+) serves as cofactor.

It is found in the cytoplasm. It carries out the reaction tRNA(Ala) + L-alanine + ATP = L-alanyl-tRNA(Ala) + AMP + diphosphate. In terms of biological role, catalyzes the attachment of alanine to tRNA(Ala) in a two-step reaction: alanine is first activated by ATP to form Ala-AMP and then transferred to the acceptor end of tRNA(Ala). Also edits incorrectly charged Ser-tRNA(Ala) and Gly-tRNA(Ala) via its editing domain. This chain is Alanine--tRNA ligase, found in Bartonella bacilliformis (strain ATCC 35685 / KC583 / Herrer 020/F12,63).